The following is a 252-amino-acid chain: 5-oxoprolinase subunit A 1 (252 aa).

This sequence belongs to the LamB/PxpA family. Forms a complex composed of PxpA, PxpB and PxpC.

The catalysed reaction is 5-oxo-L-proline + ATP + 2 H2O = L-glutamate + ADP + phosphate + H(+). In terms of biological role, catalyzes the cleavage of 5-oxoproline to form L-glutamate coupled to the hydrolysis of ATP to ADP and inorganic phosphate. The polypeptide is 5-oxoprolinase subunit A 1 (Bordetella bronchiseptica (strain ATCC BAA-588 / NCTC 13252 / RB50) (Alcaligenes bronchisepticus)).